Here is a 62-residue protein sequence, read N- to C-terminus: Amolopin-P1 (62 aa).

The first 22 residues, 1-22 (MFPMKKSLLLLFFFGPISLSFC), serve as a signal peptide directing secretion. A propeptide spanning residues 23 to 44 (DQERGADEEENGGEVTEQEVKR) is cleaved from the precursor.

Expressed by the skin glands.

The protein resides in the secreted. Its function is as follows. Antimicrobial peptide with activity against Gram-positive bacteria. Has been tested against S.aureus (MIC=37.5 ug/mL), against B.pumilus (MIC=75.0 ug/mL), B.cereus (no activity detected). Does not show activity against Gram-negative bacteria (E.coli, B.dysenteriae, A.calcoaceticus, P.aeruginosa) and fungi (C.albicans). Does not show hemolytic activity against rabbit erythrocytes. This Amolops loloensis (Lolokou Sucker Frog) protein is Amolopin-P1.